The primary structure comprises 352 residues: N-acetyl-gamma-glutamyl-phosphate reductase (352 aa).

Residue Cys155 is part of the active site.

The protein belongs to the NAGSA dehydrogenase family. Type 1 subfamily.

It is found in the cytoplasm. It catalyses the reaction N-acetyl-L-glutamate 5-semialdehyde + phosphate + NADP(+) = N-acetyl-L-glutamyl 5-phosphate + NADPH + H(+). Its pathway is amino-acid biosynthesis; L-arginine biosynthesis; N(2)-acetyl-L-ornithine from L-glutamate: step 3/4. Its function is as follows. Catalyzes the NADPH-dependent reduction of N-acetyl-5-glutamyl phosphate to yield N-acetyl-L-glutamate 5-semialdehyde. This is N-acetyl-gamma-glutamyl-phosphate reductase from Acaryochloris marina (strain MBIC 11017).